The following is a 367-amino-acid chain: DNA replication and repair protein RecF (367 aa).

30–37 (GNNGEGKT) provides a ligand contact to ATP.

The protein belongs to the RecF family.

Its subcellular location is the cytoplasm. The RecF protein is involved in DNA metabolism; it is required for DNA replication and normal SOS inducibility. RecF binds preferentially to single-stranded, linear DNA. It also seems to bind ATP. This is DNA replication and repair protein RecF from Leptospira biflexa serovar Patoc (strain Patoc 1 / Ames).